Consider the following 92-residue polypeptide: Putative protein IntG (92 aa).

The protein belongs to the 'phage' integrase family.

This Escherichia coli (strain K12) protein is Putative protein IntG (intG).